We begin with the raw amino-acid sequence, 229 residues long: Ras-related protein RABA6b (229 aa).

20–27 (GDSAVGKS) serves as a coordination point for GTP. The Effector region motif lies at 42–50 (SKPTIGVDF). Residues 68 to 72 (DTAGQ), 126 to 129 (NKSD), and 156 to 157 (SA) each bind GTP. S-geranylgeranyl cysteine attachment occurs at residues Cys-226 and Cys-227.

The protein belongs to the small GTPase superfamily. Rab family.

The protein localises to the cell membrane. Intracellular vesicle trafficking and protein transport. This is Ras-related protein RABA6b (RABA6B) from Arabidopsis thaliana (Mouse-ear cress).